A 289-amino-acid chain; its full sequence is ATP synthase subunit a (289 aa).

The next 6 helical transmembrane spans lie at 43–63 (AFHV…VLIF), 101–121 (SAVI…MNAV), 160–180 (LSVF…GGFI), 193–213 (IFVQ…TLIA), 232–252 (VFIL…GLGI), and 259–279 (AVFH…LTIV).

Belongs to the ATPase A chain family. In terms of assembly, F-type ATPases have 2 components, CF(1) - the catalytic core - and CF(0) - the membrane proton channel. CF(1) has five subunits: alpha(3), beta(3), gamma(1), delta(1), epsilon(1). CF(0) has three main subunits: a(1), b(2) and c(9-12). The alpha and beta chains form an alternating ring which encloses part of the gamma chain. CF(1) is attached to CF(0) by a central stalk formed by the gamma and epsilon chains, while a peripheral stalk is formed by the delta and b chains.

The protein resides in the cell inner membrane. Its function is as follows. Key component of the proton channel; it plays a direct role in the translocation of protons across the membrane. The protein is ATP synthase subunit a of Pseudomonas syringae pv. tomato (strain ATCC BAA-871 / DC3000).